A 518-amino-acid chain; its full sequence is Protein FAM98A (518 aa).

Disordered stretches follow at residues 300 to 415 (GRVP…GHSS) and 434 to 518 (GSGY…HYTS). Residues 302-311 (VPDRGGRPNE) are compositionally biased toward basic and acidic residues. 3 stretches are compositionally biased toward gly residues: residues 349-364 (GGRG…GGRG), 383-396 (WTDG…GYQD), and 405-415 (QPGGYHGGHSS). Basic and acidic residues predominate over residues 447–459 (RYQDGGHHGDRGG). Over residues 460–484 (GRGGRGGRGGRGGRAGQGGGWGGRG) the composition is skewed to gly residues. Residues 488–504 (YHQGGQFEQHFQHGGYQ) show a composition bias toward low complexity. A compositionally biased stretch (polar residues) spans 505–518 (YNHSGFGQGRHYTS).

This sequence belongs to the FAM98 family. As to quaternary structure, interacts (via N- and C-terminus) with DDX1. Interacts (via N- and C-terminus) with C14orf166. Interacts with FAM98B. Interacts with PLEKHM1 (via N- and C-terminus).

Its function is as follows. Positively stimulates PRMT1-induced protein arginine methylation. Involved in skeletal homeostasis. Positively regulates lysosome peripheral distribution and ruffled border formation in osteoclasts. The sequence is that of Protein FAM98A from Pongo abelii (Sumatran orangutan).